A 30-amino-acid chain; its full sequence is V-type proton ATPase catalytic subunit A isoform 1 (30 aa).

It belongs to the ATPase alpha/beta chains family. V-ATPase is a heteromultimeric enzyme composed of a peripheral catalytic V1 complex (main components: subunits A, B, C, D, E, and F) attached to an integral membrane V0 proton pore complex (main component: the proteolipid protein).

The catalysed reaction is ATP + H2O + 4 H(+)(in) = ADP + phosphate + 5 H(+)(out). Functionally, catalytic subunit of the peripheral V1 complex of vacuolar ATPase. V-ATPase vacuolar ATPase is responsible for acidifying a variety of intracellular compartments in eukaryotic cells. This is V-type proton ATPase catalytic subunit A isoform 1 from Equisetum arvense (Field horsetail).